Consider the following 240-residue polypeptide: Ribonuclease PH (240 aa).

Phosphate-binding positions include Arg-87 and 125–127 (GTR).

The protein belongs to the RNase PH family. Homohexameric ring arranged as a trimer of dimers.

It catalyses the reaction tRNA(n+1) + phosphate = tRNA(n) + a ribonucleoside 5'-diphosphate. Phosphorolytic 3'-5' exoribonuclease that plays an important role in tRNA 3'-end maturation. Removes nucleotide residues following the 3'-CCA terminus of tRNAs; can also add nucleotides to the ends of RNA molecules by using nucleoside diphosphates as substrates, but this may not be physiologically important. Probably plays a role in initiation of 16S rRNA degradation (leading to ribosome degradation) during starvation. This Pseudomonas syringae pv. tomato (strain ATCC BAA-871 / DC3000) protein is Ribonuclease PH.